A 289-amino-acid chain; its full sequence is Dermonecrotic toxin LarSicTox-betaID1 (289 aa).

Positions Glu-1–Gly-2 are cleaved as a signal peptide. Positions Ala-3–Thr-11 are excised as a propeptide. His-22 is a catalytic residue. 2 residues coordinate Mg(2+): Glu-42 and Asp-44. The active-site Nucleophile is His-58. 2 cysteine pairs are disulfide-bonded: Cys-62–Cys-68 and Cys-64–Cys-207. Residue Asp-102 coordinates Mg(2+).

The protein belongs to the arthropod phospholipase D family. Class II subfamily. The cofactor is Mg(2+). Expressed by the venom gland.

The protein resides in the secreted. It catalyses the reaction an N-(acyl)-sphingosylphosphocholine = an N-(acyl)-sphingosyl-1,3-cyclic phosphate + choline. It carries out the reaction N-hexanoyl-sphing-4-enine-1-phosphocholine = N-(hexanoyl)-sphing-4-enine-1,3-cyclic phosphate + choline. The catalysed reaction is N-(dodecanoyl)-sphing-4-enine-1-phosphocholine = N-dodecanoyl-sphing-4-enine-1,3-cyclic phosphate + choline. The enzyme catalyses an N-(acyl)-sphingosylphosphoethanolamine = an N-(acyl)-sphingosyl-1,3-cyclic phosphate + ethanolamine. It catalyses the reaction N-dodecanoyl-heptadecasphing-4-enine-1-phosphoethanolamine = N-dodecanoyl-heptadecasphing-4-enine-1,3-cyclic phosphate + ethanolamine. It carries out the reaction a 1-acyl-sn-glycero-3-phosphocholine = a 1-acyl-sn-glycero-2,3-cyclic phosphate + choline. The catalysed reaction is 1-tetradecanoyl-sn-glycero-3-phosphocholine = 1-tetradecanoyl-sn-glycero-2,3-cyclic phosphate + choline. The enzyme catalyses 1-octanoyl-sn-glycero-3-phosphocholine = 1-octanoyl-sn-glycero-2,3-cyclic phosphate + choline. It catalyses the reaction a 1-acyl-sn-glycero-3-phosphoethanolamine = a 1-acyl-sn-glycero-2,3-cyclic phosphate + ethanolamine. It carries out the reaction 1-tetradecanoyl-sn-glycero-3-phosphoethanolamine = 1-tetradecanoyl-sn-glycero-2,3-cyclic phosphate + ethanolamine. In terms of biological role, dermonecrotic toxins cleave the phosphodiester linkage between the phosphate and headgroup of certain phospholipids (sphingolipid and lysolipid substrates), forming an alcohol (often choline) and a cyclic phosphate. This toxin acts on sphingomyelin (SM) and on ceramide phosphoethanolamine (CPE) with high activity. It also acts on lysophosphatidylcholine (LPC) and on lysophosphatidylethanolamine (LPE) with moderate activity. It is not active on lysophosphatidylserine (LPS), and lysophosphatidylglycerol (LPG). It acts by transphosphatidylation, releasing exclusively cyclic phosphate as second products. It is not surprising that spider toxins have affinity for ethanolamine-containing sphingolipids since they are common in insect prey. On mammals, induces dermonecrosis, hemolysis, increased vascular permeability, edema, inflammatory response, and platelet aggregation. This chain is Dermonecrotic toxin LarSicTox-betaID1, found in Loxosceles arizonica (Arizona brown spider).